The following is a 227-amino-acid chain: Glutathione S-transferase U27 (227 aa).

Residues 4–84 (EEVVVLNFWP…YIDEVWKDDK (81 aa)) enclose the GST N-terminal domain. Glutathione-binding positions include 14 to 15 (SM), 41 to 42 (QK), 55 to 56 (KI), and 68 to 69 (ES). The 126-residue stretch at 92–217 (DPYQKSQCRF…LKIFDRVTQI (126 aa)) folds into the GST C-terminal domain.

Belongs to the GST superfamily. Tau family.

It is found in the cytoplasm. The protein resides in the cytosol. The enzyme catalyses RX + glutathione = an S-substituted glutathione + a halide anion + H(+). May be involved in the conjugation of reduced glutathione to a wide number of exogenous and endogenous hydrophobic electrophiles and have a detoxification role against certain herbicides. The chain is Glutathione S-transferase U27 (GSTU27) from Arabidopsis thaliana (Mouse-ear cress).